The sequence spans 319 residues: tRNA-cytidine(32) 2-sulfurtransferase (319 aa).

The short motif at 45-50 (SGGKDS) is the PP-loop motif element. [4Fe-4S] cluster-binding residues include C120, C123, and C211.

Belongs to the TtcA family. Homodimer. Mg(2+) serves as cofactor. It depends on [4Fe-4S] cluster as a cofactor.

The protein resides in the cytoplasm. It catalyses the reaction cytidine(32) in tRNA + S-sulfanyl-L-cysteinyl-[cysteine desulfurase] + AH2 + ATP = 2-thiocytidine(32) in tRNA + L-cysteinyl-[cysteine desulfurase] + A + AMP + diphosphate + H(+). Its pathway is tRNA modification. Catalyzes the ATP-dependent 2-thiolation of cytidine in position 32 of tRNA, to form 2-thiocytidine (s(2)C32). The sulfur atoms are provided by the cysteine/cysteine desulfurase (IscS) system. The polypeptide is tRNA-cytidine(32) 2-sulfurtransferase (Shewanella woodyi (strain ATCC 51908 / MS32)).